The sequence spans 266 residues: Luciferase (266 aa).

The helical transmembrane segment at 22–41 (GLAAACCALAVASTIAFPYI) threads the bilayer.

Belongs to the fungal luciferase family.

The protein localises to the membrane. The enzyme catalyses 3-hydroxyhispidin + O2 = (E)-caffeoylpyruvate + hnu + CO2. It carries out the reaction 3-hydroxyhispidin + O2 = 4-[(E)-2-(3,4-dihydroxyphenyl)ethenyl]-1,7-dihydroxy-2,3,5-trioxabicyclo[2.2.2]oct-7-en-6-one. Its function is as follows. Luciferase; part of the gene cluster that mediates the fungal bioluminescence cycle. Uses the fungal luciferin 3-hydroxyhispidin as a substrate to produce an endoperoxide as a high-energy intermediate with decomposition that yields oxyluciferin (also known as caffeoylpyruvate) and light emission. The fungal bioluminescence cycle begins with the hispidin synthetase that catalyzes the formation of hispidin which is further hydroxylated by the hispidin-3-hydroxylase, yielding the fungal luciferin 3-hydroxyhispidin. The luciferase then produces an endoperoxide as a high-energy intermediate with decomposition that yields oxyluciferin and light emission. Oxyluciferin can be recycled to caffeic acid by caffeoylpyruvate hydrolase. The protein is Luciferase of Armillaria gallica (Bulbous honey fungus).